The chain runs to 429 residues: Argininosuccinate lyase (429 aa).

It belongs to the lyase 1 family. Argininosuccinate lyase subfamily.

Its subcellular location is the cytoplasm. It catalyses the reaction 2-(N(omega)-L-arginino)succinate = fumarate + L-arginine. It functions in the pathway amino-acid biosynthesis; L-arginine biosynthesis; L-arginine from L-ornithine and carbamoyl phosphate: step 3/3. This chain is Argininosuccinate lyase, found in Pyrobaculum neutrophilum (strain DSM 2338 / JCM 9278 / NBRC 100436 / V24Sta) (Thermoproteus neutrophilus).